We begin with the raw amino-acid sequence, 390 residues long: Probable tRNA pseudouridine synthase D 2 (390 aa).

Asp-93 (nucleophile) is an active-site residue. In terms of domain architecture, TRUD spans 166–353; it reads YVLNYYGIQR…YGTRRKMVTP (188 aa).

This sequence belongs to the pseudouridine synthase TruD family.

It catalyses the reaction uridine(13) in tRNA = pseudouridine(13) in tRNA. Functionally, could be responsible for synthesis of pseudouridine from uracil-13 in transfer RNAs. This Methanococcus maripaludis (strain DSM 14266 / JCM 13030 / NBRC 101832 / S2 / LL) protein is Probable tRNA pseudouridine synthase D 2.